The sequence spans 533 residues: Peptide chain release factor 3 (533 aa).

Residues 11–284 (RRRRTFAIIS…ALVGLSPEPL (274 aa)) enclose the tr-type G domain. GTP-binding positions include 20–27 (SHPDAGKT), 92–96 (DTPGH), and 146–149 (NKLD).

It belongs to the TRAFAC class translation factor GTPase superfamily. Classic translation factor GTPase family. PrfC subfamily.

It localises to the cytoplasm. Its function is as follows. Increases the formation of ribosomal termination complexes and stimulates activities of RF-1 and RF-2. It binds guanine nucleotides and has strong preference for UGA stop codons. It may interact directly with the ribosome. The stimulation of RF-1 and RF-2 is significantly reduced by GTP and GDP, but not by GMP. This is Peptide chain release factor 3 from Ralstonia nicotianae (strain ATCC BAA-1114 / GMI1000) (Ralstonia solanacearum).